The chain runs to 137 residues: Large ribosomal subunit protein uL14 (137 aa).

The protein belongs to the universal ribosomal protein uL14 family. As to quaternary structure, part of the 50S ribosomal subunit. Forms a cluster with proteins L3 and L24e, part of which may contact the 16S rRNA in 2 intersubunit bridges.

Functionally, binds to 23S rRNA. Forms part of two intersubunit bridges in the 70S ribosome. The protein is Large ribosomal subunit protein uL14 of Ignicoccus hospitalis (strain KIN4/I / DSM 18386 / JCM 14125).